The following is a 151-amino-acid chain: 3-hydroxyacyl-[acyl-carrier-protein] dehydratase FabZ (151 aa).

His54 is a catalytic residue.

This sequence belongs to the thioester dehydratase family. FabZ subfamily.

It is found in the cytoplasm. It carries out the reaction a (3R)-hydroxyacyl-[ACP] = a (2E)-enoyl-[ACP] + H2O. In terms of biological role, involved in unsaturated fatty acids biosynthesis. Catalyzes the dehydration of short chain beta-hydroxyacyl-ACPs and long chain saturated and unsaturated beta-hydroxyacyl-ACPs. The chain is 3-hydroxyacyl-[acyl-carrier-protein] dehydratase FabZ from Buchnera aphidicola subsp. Acyrthosiphon pisum (strain 5A).